The primary structure comprises 558 residues: CTP synthase (558 aa).

Residues 1–267 are amidoligase domain; that stretch reads MTKFVFVTGG…AQQTLELLNL (267 aa). Serine 13 serves as a coordination point for CTP. Serine 13 provides a ligand contact to UTP. Residues 14–19 and aspartate 71 contribute to the ATP site; that span reads SIGKGI. Mg(2+)-binding residues include aspartate 71 and glutamate 141. CTP contacts are provided by residues 148-150, 188-193, and lysine 224; these read DIE and KTKPTQ. UTP contacts are provided by residues 188 to 193 and lysine 224; that span reads KTKPTQ. The Glutamine amidotransferase type-1 domain occupies 292 to 534; the sequence is EVALVGKYVQ…VKASVDYNHV (243 aa). Glycine 354 contributes to the L-glutamine binding site. Cysteine 381 (nucleophile; for glutamine hydrolysis) is an active-site residue. L-glutamine is bound by residues 382–385, glutamate 405, and arginine 462; that span reads MGMQ. Residues histidine 507 and glutamate 509 contribute to the active site.

It belongs to the CTP synthase family. Homotetramer.

It carries out the reaction UTP + L-glutamine + ATP + H2O = CTP + L-glutamate + ADP + phosphate + 2 H(+). The catalysed reaction is L-glutamine + H2O = L-glutamate + NH4(+). The enzyme catalyses UTP + NH4(+) + ATP = CTP + ADP + phosphate + 2 H(+). It participates in pyrimidine metabolism; CTP biosynthesis via de novo pathway; CTP from UDP: step 2/2. Its activity is regulated as follows. Allosterically activated by GTP, when glutamine is the substrate; GTP has no effect on the reaction when ammonia is the substrate. The allosteric effector GTP functions by stabilizing the protein conformation that binds the tetrahedral intermediate(s) formed during glutamine hydrolysis. Inhibited by the product CTP, via allosteric rather than competitive inhibition. Catalyzes the ATP-dependent amination of UTP to CTP with either L-glutamine or ammonia as the source of nitrogen. Regulates intracellular CTP levels through interactions with the four ribonucleotide triphosphates. The chain is CTP synthase from Gloeothece citriformis (strain PCC 7424) (Cyanothece sp. (strain PCC 7424)).